The following is a 487-amino-acid chain: Neuronal immunoglobulin domain-containing protein rig-3 (487 aa).

The signal sequence occupies residues 1 to 23 (MGRLLAKMLFPLAMCLFVSAVSA). Ig-like domains follow at residues 34 to 139 (PIVI…KTIK) and 247 to 354 (PEFE…PKVT). Cystine bridges form between Cys-61-Cys-124 and Cys-271-Cys-327. Asp-466 carries GPI-anchor amidated aspartate lipidation. Residues 467–487 (SASDSKFPLALATLFFVCLFI) constitute a propeptide, removed in mature form.

As to expression, expressed in the cholinergic motor neurons AS, VA and DA in the ventral nerve cord and in the mechanosensory ALM neurons in the midbody.

Its subcellular location is the cell projection. It is found in the axon. The protein localises to the synapse. It localises to the cell membrane. Its function is as follows. Cell surface protein which plays a role in the plasticity of cholinergic synapses at neuromuscular junctions and in the polarity of the mechanosensory neuron ALM, possibly by antagonizing Wnt signaling. The polypeptide is Neuronal immunoglobulin domain-containing protein rig-3 (Caenorhabditis elegans).